Here is a 235-residue protein sequence, read N- to C-terminus: RAD9, HUS1, RAD1-interacting nuclear orphan protein 1 (235 aa).

Serine 50 bears the Phosphoserine mark. Residues 54 to 60 carry the RAD1-binding motif motif; the sequence is SWVLPQF. The disordered stretch occupies residues 66–106; it reads SRFPTHRKHHRDQARHPTRRSTCKFPRLTFESPESSSSETL. Residues 69 to 87 show a composition bias toward basic residues; sequence PTHRKHHRDQARHPTRRST. Residues 96–106 show a composition bias toward low complexity; sequence ESPESSSSETL. The D-box signature appears at 123-130; the sequence is RRPLVPLF. A disordered region spans residues 156 to 198; sequence QTPGSSVREDPISPDQKENSLPSCILGPRTPRTPEPGPVLVKD. The segment covering 162 to 173 has biased composition (basic and acidic residues); it reads VREDPISPDQKE. Positions 171 to 175 match the KEN box motif; sequence QKENS.

As to quaternary structure, interacts (when phosphorylated by PLK1) with POLQ; promoting POLQ recruitment to DNA damage sites. Interacts with RAD1; interaction is direct and promotes association with the 9-1-1 (RAD9-RAD1-HUS1) complex. Interacts with RAD18. Interacts with TOPBP1. Interacts with UBE2N. Phosphorylated at Ser-50 by PLK1, promoting interaction with polymerase theta (POLQ). In terms of processing, ubiquitinated and degraded by the APC/C complex upon mitotic exit.

Its subcellular location is the nucleus. The protein resides in the chromosome. Functionally, involved in microhomology-mediated end-joining (MMEJ) DNA repair by promoting recruitment of polymerase theta (POLQ) to DNA damage sites during mitosis. MMEJ is an alternative non-homologous end-joining (NHEJ) machinery that takes place during mitosis to repair double-strand breaks in DNA that originate in S-phase. Accumulates in M-phase; following phosphorylation by PLK1, interacts with POLQ, enabling its recruitment to double-strand breaks for subsequent repair. Also involved in the DNA damage response (DDR) signaling in response to genotoxic stresses such as ionizing radiation (IR) during the S phase. Recruited to sites of DNA damage through interaction with the 9-1-1 cell-cycle checkpoint response complex and TOPBP1 in a ATR-dependent manner. Required for the progression of the G1 to S phase transition. Plays a role in the stimulation of CHEK1 phosphorylation. This chain is RAD9, HUS1, RAD1-interacting nuclear orphan protein 1 (Rhno1), found in Rattus norvegicus (Rat).